We begin with the raw amino-acid sequence, 594 residues long: DNA polymerase II small subunit (594 aa).

Belongs to the DNA polymerase delta/II small subunit family. As to quaternary structure, heterodimer of a large subunit and a small subunit.

It carries out the reaction DNA(n) + a 2'-deoxyribonucleoside 5'-triphosphate = DNA(n+1) + diphosphate. The enzyme catalyses Exonucleolytic cleavage in the 3'- to 5'-direction to yield nucleoside 5'-phosphates.. Possesses two activities: a DNA synthesis (polymerase) and an exonucleolytic activity that degrades single-stranded DNA in the 3' to 5' direction. Has a template-primer preference which is characteristic of a replicative DNA polymerase. The polypeptide is DNA polymerase II small subunit (polB) (Methanocaldococcus jannaschii (strain ATCC 43067 / DSM 2661 / JAL-1 / JCM 10045 / NBRC 100440) (Methanococcus jannaschii)).